A 391-amino-acid chain; its full sequence is Mannonate dehydratase (391 aa).

The segment at 334 to 359 (ERRRERDGGPRLPLRPDHGHHLLDDL) is disordered.

It belongs to the mannonate dehydratase family. The cofactor is Fe(2+). Requires Mn(2+) as cofactor.

The catalysed reaction is D-mannonate = 2-dehydro-3-deoxy-D-gluconate + H2O. It participates in carbohydrate metabolism; pentose and glucuronate interconversion. Functionally, catalyzes the dehydration of D-mannonate. In Chromohalobacter salexigens (strain ATCC BAA-138 / DSM 3043 / CIP 106854 / NCIMB 13768 / 1H11), this protein is Mannonate dehydratase.